The sequence spans 203 residues: Small ribosomal subunit protein uS4 (203 aa).

Residues 93 to 173 (RRFDNVVFRS…IPSWIQVDKA (81 aa)) form the S4 RNA-binding domain.

The protein belongs to the universal ribosomal protein uS4 family. Part of the 30S ribosomal subunit. Contacts protein S5. The interaction surface between S4 and S5 is involved in control of translational fidelity.

In terms of biological role, one of the primary rRNA binding proteins, it binds directly to 16S rRNA where it nucleates assembly of the body of the 30S subunit. Functionally, with S5 and S12 plays an important role in translational accuracy. This is Small ribosomal subunit protein uS4 from Chlorobium phaeobacteroides (strain DSM 266 / SMG 266 / 2430).